Consider the following 471-residue polypeptide: Light-independent protochlorophyllide reductase subunit N (471 aa).

C22, C47, and C107 together coordinate [4Fe-4S] cluster.

This sequence belongs to the BchN/ChlN family. In terms of assembly, protochlorophyllide reductase is composed of three subunits; ChlL, ChlN and ChlB. Forms a heterotetramer of two ChlB and two ChlN subunits. [4Fe-4S] cluster serves as cofactor.

It localises to the plastid. It is found in the chloroplast. It catalyses the reaction chlorophyllide a + oxidized 2[4Fe-4S]-[ferredoxin] + 2 ADP + 2 phosphate = protochlorophyllide a + reduced 2[4Fe-4S]-[ferredoxin] + 2 ATP + 2 H2O. It participates in porphyrin-containing compound metabolism; chlorophyll biosynthesis (light-independent). Component of the dark-operative protochlorophyllide reductase (DPOR) that uses Mg-ATP and reduced ferredoxin to reduce ring D of protochlorophyllide (Pchlide) to form chlorophyllide a (Chlide). This reaction is light-independent. The NB-protein (ChlN-ChlB) is the catalytic component of the complex. The polypeptide is Light-independent protochlorophyllide reductase subunit N (Huperzia lucidula (Shining clubmoss)).